Consider the following 447-residue polypeptide: Chitobiosyldiphosphodolichol beta-mannosyltransferase (447 aa).

Over M1–T2 the chain is Cytoplasmic. The helical; Signal-anchor for type II membrane protein transmembrane segment at L3–L23 threads the bilayer. Residues P24 to T447 are Lumenal-facing.

Belongs to the glycosyltransferase group 1 family. Glycosyltransferase 33 subfamily.

The protein localises to the endoplasmic reticulum membrane. It carries out the reaction an N,N'-diacetylchitobiosyl-diphospho-di-trans,poly-cis-dolichol + GDP-alpha-D-mannose = a beta-D-Man-(1-&gt;4)-beta-D-GlcNAc-(1-&gt;4)-alpha-D-GlcNAc-diphospho-di-trans,poly-cis-dolichol + GDP + H(+). It functions in the pathway protein modification; protein glycosylation. Its function is as follows. Participates in the formation of the lipid-linked precursor oligosaccharide for N-glycosylation. Involved in assembling the dolichol-pyrophosphate-GlcNAc(2)-Man(5) intermediate on the cytoplasmic surface of the ER. The polypeptide is Chitobiosyldiphosphodolichol beta-mannosyltransferase (Arthroderma benhamiae (strain ATCC MYA-4681 / CBS 112371) (Trichophyton mentagrophytes)).